A 212-amino-acid chain; its full sequence is Ribonuclease HII (212 aa).

The 206-residue stretch at Ser7–Glu212 folds into the RNase H type-2 domain. 3 residues coordinate a divalent metal cation: Asp13, Glu14, and Asp111.

This sequence belongs to the RNase HII family. Requires Mn(2+) as cofactor. Mg(2+) serves as cofactor.

The protein resides in the cytoplasm. It carries out the reaction Endonucleolytic cleavage to 5'-phosphomonoester.. Endonuclease that specifically degrades the RNA of RNA-DNA hybrids. The chain is Ribonuclease HII from Methanosphaera stadtmanae (strain ATCC 43021 / DSM 3091 / JCM 11832 / MCB-3).